The following is a 484-amino-acid chain: Trigger factor (484 aa).

The region spanning 165 to 244 is the PPIase FKBP-type domain; sequence GDFVQIDLTA…VQSVKERELP (80 aa). The segment at 429-484 is disordered; sequence DAVSEEPADADAEAVVADAPAEEAAEAPAAEEAPAEKPKKKAPAKKKASEKAADSE. A compositionally biased stretch (acidic residues) spans 430–440; sequence AVSEEPADADA. Basic and acidic residues predominate over residues 475–484; that stretch reads KASEKAADSE.

The protein belongs to the FKBP-type PPIase family. Tig subfamily.

It localises to the cytoplasm. The catalysed reaction is [protein]-peptidylproline (omega=180) = [protein]-peptidylproline (omega=0). Functionally, involved in protein export. Acts as a chaperone by maintaining the newly synthesized protein in an open conformation. Functions as a peptidyl-prolyl cis-trans isomerase. The sequence is that of Trigger factor from Clavibacter michiganensis subsp. michiganensis (strain NCPPB 382).